Here is a 299-residue protein sequence, read N- to C-terminus: Oxygen-dependent coproporphyrinogen-III oxidase (299 aa).

Residue S92 participates in substrate binding. Residues H96 and H106 each contribute to the a divalent metal cation site. The active-site Proton donor is H106. 108–110 (NVR) is a binding site for substrate. Positions 145 and 175 each coordinate a divalent metal cation. Residues 240–275 (YVEFNLVWDRGTLFGLQTGGRTESILMSMPPLVRWE) are important for dimerization. 258–260 (GGR) is a binding site for substrate.

This sequence belongs to the aerobic coproporphyrinogen-III oxidase family. In terms of assembly, homodimer. The cofactor is a divalent metal cation.

It is found in the cytoplasm. It carries out the reaction coproporphyrinogen III + O2 + 2 H(+) = protoporphyrinogen IX + 2 CO2 + 2 H2O. The protein operates within porphyrin-containing compound metabolism; protoporphyrin-IX biosynthesis; protoporphyrinogen-IX from coproporphyrinogen-III (O2 route): step 1/1. Its function is as follows. Involved in the heme biosynthesis. Catalyzes the aerobic oxidative decarboxylation of propionate groups of rings A and B of coproporphyrinogen-III to yield the vinyl groups in protoporphyrinogen-IX. The sequence is that of Oxygen-dependent coproporphyrinogen-III oxidase from Salmonella schwarzengrund (strain CVM19633).